The following is a 185-amino-acid chain: Guanylate kinase (185 aa).

A Guanylate kinase-like domain is found at 3 to 181 (TRMIIVAAPS…SYGEFKKIVE (179 aa)). 10–17 (APSGAGKS) is an ATP binding site.

This sequence belongs to the guanylate kinase family.

It is found in the cytoplasm. The enzyme catalyses GMP + ATP = GDP + ADP. Its function is as follows. Essential for recycling GMP and indirectly, cGMP. The polypeptide is Guanylate kinase (Bdellovibrio bacteriovorus (strain ATCC 15356 / DSM 50701 / NCIMB 9529 / HD100)).